The following is an 88-amino-acid chain: Putative sulfur carrier protein AF_0552 (88 aa).

Belongs to the sulfur carrier protein CysO family.

This chain is Putative sulfur carrier protein AF_0552, found in Archaeoglobus fulgidus (strain ATCC 49558 / DSM 4304 / JCM 9628 / NBRC 100126 / VC-16).